Consider the following 410-residue polypeptide: Arginine deiminase (410 aa).

Cysteine 400 serves as the catalytic Amidino-cysteine intermediate.

Belongs to the arginine deiminase family.

It is found in the cytoplasm. The enzyme catalyses L-arginine + H2O = L-citrulline + NH4(+). The protein operates within amino-acid degradation; L-arginine degradation via ADI pathway; carbamoyl phosphate from L-arginine: step 1/2. The chain is Arginine deiminase (arcA) from Borreliella burgdorferi (strain ATCC 35210 / DSM 4680 / CIP 102532 / B31) (Borrelia burgdorferi).